Here is a 510-residue protein sequence, read N- to C-terminus: MDGFCDQQVPFMVPGKSRSEDCRGRPLIDRKRKFVDTDLAHDSEELFQDLSQLQEAWLAEAQVPDDEQFVPDFQSDNLVLHAPPPTKIKRELHSPSSELSSCSHEQALGAKYGEKCLYNYCAYDRKPPSGFKPLTPPATPLSPTHQNSLFPPPQATLPTSGLTPGAGPVQGVGPAPTPHSLPEPGSQQQTFAVPRPPHQPLQMPKMMPESQYPSEQRFQRQLSEPSHPFPPQSGVPGDSRPSYHRQMSEPIVPAAPPPLQGFKQEYHDPLYEHGVPGMPGPPAHGFQSPMGIKQEPRDYCADSEVPNCQSSYMRGGYFSSSHEGFPYEKDPRLYFDDTCVVPERLEGKVKQEPTMYREGPPYQRRGSLQLWQFLVTLLDDPANAHFIAWTGRGMEFKLIEPEEVARRWGIQKNRPAMNYDKLSRSLRYYYEKGIMQKVAGERYVYKFVCDPDALFSMAFPDNQRPFLKAESECPLNEEDTLPLTHFEDNPAYLLDMDRCSSLPYTEGFAY.

The interval 132–245 (KPLTPPATPL…PGDSRPSYHR (114 aa)) is disordered. The segment covering 163–174 (TPGAGPVQGVGP) has biased composition (low complexity). Positions 211–224 (QYPSEQRFQRQLSE) are enriched in polar residues. The residue at position 248 (Ser-248) is a Phosphoserine. Lys-350 is covalently cross-linked (Glycyl lysine isopeptide (Lys-Gly) (interchain with G-Cter in SUMO2)). The ETS DNA-binding region spans 368–448 (LQLWQFLVTL…AGERYVYKFV (81 aa)).

This sequence belongs to the ETS family. As to quaternary structure, interacts (via C-terminal) with ZMYM5 (via N-terminal 120 amino acid region). In the brain, expressed predominantly in the cerebral cortex, the amygdala and the hypothalamus. Within the cerebral cortex, there is conspicuously high expression in cortical layers 2, 4 and 6 while expression is almost absent from layers 1, 3 and 5. High expression is also observed in the dorsal and ventral endopiriform claustrum. Strong expression is observed in limited parts of the amygdala including the basolateral amygdaloid nucleus, the bed stria terminalis and the central amygdaloid nucleus. Low to moderate levels are found in the hypothalamus while expression is almost absent in the thalamus. Hypothalamic expression is seen in the dorsomedial hypothalamic nucleus and also the central, dorsomedial and ventrolateral parts of the ventromedial hypothalamic nucleus. Strong expression is also identified in the nigrostriatal tract. In the mesencephalon, expression is restricted to the ventral tegmental area including the parabrachial pigmented nucleus. In the hippocampus, strongly expressed in the pyramidal cell layer. Some expression is also found in the lacunosum moleculare layer. Low levels of expression in the cerebellum, including the granular, molecular and Purkinje cell layers.

It is found in the nucleus. Its function is as follows. Binds to DNA sequences containing the consensus nucleotide core sequence 5'-GGAA.-3'. The polypeptide is ETS translocation variant 5 (Etv5) (Mus musculus (Mouse)).